The following is a 77-amino-acid chain: Large ribosomal subunit protein uL29 (77 aa).

This sequence belongs to the universal ribosomal protein uL29 family.

This chain is Large ribosomal subunit protein uL29, found in Cutibacterium acnes (strain DSM 16379 / KPA171202) (Propionibacterium acnes).